The primary structure comprises 389 residues: Chorismate synthase (389 aa).

Residues Arg40 and Arg46 each coordinate NADP(+). Residues 130 to 132 (RAS), 251 to 252 (QA), Gly297, 312 to 316 (KPIST), and Arg338 contribute to the FMN site.

The protein belongs to the chorismate synthase family. As to quaternary structure, homotetramer. It depends on FMNH2 as a cofactor.

It carries out the reaction 5-O-(1-carboxyvinyl)-3-phosphoshikimate = chorismate + phosphate. Its pathway is metabolic intermediate biosynthesis; chorismate biosynthesis; chorismate from D-erythrose 4-phosphate and phosphoenolpyruvate: step 7/7. Catalyzes the anti-1,4-elimination of the C-3 phosphate and the C-6 proR hydrogen from 5-enolpyruvylshikimate-3-phosphate (EPSP) to yield chorismate, which is the branch point compound that serves as the starting substrate for the three terminal pathways of aromatic amino acid biosynthesis. This reaction introduces a second double bond into the aromatic ring system. The polypeptide is Chorismate synthase (Solibacter usitatus (strain Ellin6076)).